Here is a 317-residue protein sequence, read N- to C-terminus: 3-oxoacyl-[acyl-carrier-protein] reductase 5, chloroplastic (317 aa).

The N-terminal 57 residues, 1 to 57, are a transit peptide targeting the chloroplast; it reads TTVAATKLTSLKATAGKLGYREICQVRQWAPLKSAMPHFGMLRCATSTVVKAQAQAQ. Position 79–103 (79–103) interacts with NADP(+); it reads VTGASRGIGKAIALSLGKAGCKVLV. S211 lines the substrate pocket. Residue Y224 is the Proton acceptor of the active site.

It belongs to the short-chain dehydrogenases/reductases (SDR) family. In terms of assembly, homotetramer.

It is found in the plastid. Its subcellular location is the chloroplast. The catalysed reaction is a (3R)-hydroxyacyl-[ACP] + NADP(+) = a 3-oxoacyl-[ACP] + NADPH + H(+). It functions in the pathway lipid metabolism; fatty acid biosynthesis. The polypeptide is 3-oxoacyl-[acyl-carrier-protein] reductase 5, chloroplastic (bkr1) (Brassica napus (Rape)).